The sequence spans 310 residues: 5'-adenylylsulfate reductase-like 4 (310 aa).

An N-terminal signal peptide occupies residues 1 to 22; the sequence is MEKEILLLLLVIMFLTVADVDA. A Thioredoxin domain is found at 49–168; that stretch reads GVESDERPRF…LVAFYSDVTG (120 aa). N-linked (GlcNAc...) asparagine glycosylation is found at Asn-143 and Asn-190. Residues 217–237 traverse the membrane as a helical segment; sequence LAIVFVLLRLLHLIYPTLVVF.

It localises to the membrane. The chain is 5'-adenylylsulfate reductase-like 4 (APRL4) from Arabidopsis thaliana (Mouse-ear cress).